A 149-amino-acid chain; its full sequence is D-aminoacyl-tRNA deacylase (149 aa).

Positions 137-138 (GP) match the Gly-cisPro motif, important for rejection of L-amino acids motif.

Belongs to the DTD family. As to quaternary structure, homodimer.

Its subcellular location is the cytoplasm. It catalyses the reaction glycyl-tRNA(Ala) + H2O = tRNA(Ala) + glycine + H(+). The enzyme catalyses a D-aminoacyl-tRNA + H2O = a tRNA + a D-alpha-amino acid + H(+). Its function is as follows. An aminoacyl-tRNA editing enzyme that deacylates mischarged D-aminoacyl-tRNAs. Also deacylates mischarged glycyl-tRNA(Ala), protecting cells against glycine mischarging by AlaRS. Acts via tRNA-based rather than protein-based catalysis; rejects L-amino acids rather than detecting D-amino acids in the active site. By recycling D-aminoacyl-tRNA to D-amino acids and free tRNA molecules, this enzyme counteracts the toxicity associated with the formation of D-aminoacyl-tRNA entities in vivo and helps enforce protein L-homochirality. The chain is D-aminoacyl-tRNA deacylase from Syntrophobacter fumaroxidans (strain DSM 10017 / MPOB).